Reading from the N-terminus, the 856-residue chain is Structure-specific endonuclease subunit SLX4 (856 aa).

Over residues 1–19 (MDNAAIASQSNTPPSNGRS) the composition is skewed to polar residues. Disordered regions lie at residues 1–24 (MDNA…ARFV), 39–61 (IEPS…SKSP), 88–121 (VDSP…HKMA), 139–201 (KTRK…TDNE), 296–326 (GIQT…KKPQ), 362–392 (KKMG…GNGP), 621–640 (SKSS…SQGD), 653–688 (RSDS…SNEG), and 715–742 (DSVG…QDCD). Low complexity predominate over residues 51–60 (STLLTSLSKS). Over residues 139 to 152 (KTRKKKAATAKRTR) the composition is skewed to basic residues. Polar residues predominate over residues 296-309 (GIQTPTESRPATND). Over residues 673-686 (SVKSQESKSFSLSN) the composition is skewed to polar residues.

Belongs to the SLX4 family. As to quaternary structure, forms a heterodimer with SLX1. Post-translationally, phosphorylated in response to DNA damage.

The protein localises to the nucleus. Its function is as follows. Regulatory subunit of the SLX1-SLX4 structure-specific endonuclease that resolves DNA secondary structures generated during DNA repair and recombination. Has endonuclease activity towards branched DNA substrates, introducing single-strand cuts in duplex DNA close to junctions with ss-DNA. In Ajellomyces dermatitidis (strain ER-3 / ATCC MYA-2586) (Blastomyces dermatitidis), this protein is Structure-specific endonuclease subunit SLX4.